The primary structure comprises 263 residues: uncharacterized protein (263 aa).

ATP is bound at residue 31–38 (GPTGSGKT).

The protein belongs to the CbbQ/NirQ/NorQ/GpvN family.

This is an uncharacterized protein from Staphylococcus haemolyticus (strain JCSC1435).